Consider the following 577-residue polypeptide: Aspartate--tRNA(Asp/Asn) ligase (577 aa).

An L-aspartate-binding site is contributed by Glu-171. The tract at residues 195-198 (QLFK) is aspartate. An L-aspartate-binding site is contributed by Arg-217. Residues 217–219 (RDE) and Gln-226 contribute to the ATP site. Residue His-444 coordinates L-aspartate. An ATP-binding site is contributed by Glu-474. Arg-481 contacts L-aspartate. 526 to 529 (GFDR) contacts ATP.

It belongs to the class-II aminoacyl-tRNA synthetase family. Type 1 subfamily. Homodimer.

The protein resides in the cytoplasm. The catalysed reaction is tRNA(Asx) + L-aspartate + ATP = L-aspartyl-tRNA(Asx) + AMP + diphosphate. In terms of biological role, aspartyl-tRNA synthetase with relaxed tRNA specificity since it is able to aspartylate not only its cognate tRNA(Asp) but also tRNA(Asn). Reaction proceeds in two steps: L-aspartate is first activated by ATP to form Asp-AMP and then transferred to the acceptor end of tRNA(Asp/Asn). The polypeptide is Aspartate--tRNA(Asp/Asn) ligase (Helicobacter pylori (strain HPAG1)).